The primary structure comprises 398 residues: L-glutamine--4-(methylsulfanyl)-2-oxobutanoate aminotransferase (398 aa).

Lys-240 bears the N6-(pyridoxal phosphate)lysine mark.

Belongs to the class-I pyridoxal-phosphate-dependent aminotransferase family. MtnE subfamily. Requires pyridoxal 5'-phosphate as cofactor.

It carries out the reaction 4-methylsulfanyl-2-oxobutanoate + L-glutamine = 2-oxoglutaramate + L-methionine. It participates in amino-acid biosynthesis; L-methionine biosynthesis via salvage pathway; L-methionine from S-methyl-5-thio-alpha-D-ribose 1-phosphate: step 6/6. Its function is as follows. Involved in the methylthioribose (MTR) recycling pathway. Catalyzes the formation of methionine from 2-keto-4-methylthiobutyrate (KMTB). The chain is L-glutamine--4-(methylsulfanyl)-2-oxobutanoate aminotransferase from Bacillus subtilis (strain 168).